A 500-amino-acid chain; its full sequence is UPF0371 protein SZO_06760 (500 aa).

Belongs to the UPF0371 family.

In Streptococcus equi subsp. zooepidemicus (strain H70), this protein is UPF0371 protein SZO_06760.